Consider the following 108-residue polypeptide: Large ribosomal subunit protein uL24 (108 aa).

The protein belongs to the universal ribosomal protein uL24 family. Part of the 50S ribosomal subunit.

One of two assembly initiator proteins, it binds directly to the 5'-end of the 23S rRNA, where it nucleates assembly of the 50S subunit. Functionally, one of the proteins that surrounds the polypeptide exit tunnel on the outside of the subunit. The sequence is that of Large ribosomal subunit protein uL24 from Pelobacter propionicus (strain DSM 2379 / NBRC 103807 / OttBd1).